We begin with the raw amino-acid sequence, 215 residues long: MRGLRWRYTRLPSQVEDTLSGEEGNEEEEEEEAAPDPAAAPEDPTVPQLTEASQVLSASEIRQLSFHFPPRVTGHPWSLVFCTSRDGFSLQSLYRRMEGCSGPVLLVLRDQDGQIFGAFSSSAIRLSKGFYGTGETFLFSFSPQLKVFKWTGSNSFFVKGDLDSLMMGSGSGRFGLWLDGDLFRGGSSPCPTFNNEVLARQEQFCIQELEAWLLS.

A disordered region spans residues methionine 1–valine 46. Positions leucine 19 to alanine 34 are enriched in acidic residues. In terms of domain architecture, TLDc spans glutamine 54–serine 215.

This sequence belongs to the OXR1 family.

The protein is TLD domain-containing protein 2 (TLDC2) of Homo sapiens (Human).